A 472-amino-acid polypeptide reads, in one-letter code: Mixed lineage kinase domain-like protein (472 aa).

The N-terminal bundle and brace (NBB); mediates INSP6 binding stretch occupies residues 1–143; the sequence is MDKLGQIIKL…QEDRQDAEED (143 aa). Positions 61-81 form a coiled coil; sequence LGRFDEVLKEANQQIEKFSKK. S124 is modified (phosphoserine). Positions 138–229 form a coiled coil; it reads QDAEEDGNEN…VFNNPQAESV (92 aa). The Protein kinase domain maps to 192–456; that stretch reads GPPWTKLKTS…DGRSLSGRER (265 aa). ATP is bound by residues 198 to 206 and K219; that span reads LKTSKMSTI. S345 and S347 each carry phosphoserine; by RIPK3. T349 is modified (phosphothreonine; by RIPK3). S352 is modified (phosphoserine; by RIPK3).

It belongs to the protein kinase superfamily. Homooligomer. Homotrimer; forms homotrimers on necroptosis induction. Upon TNF-induced necrosis, forms in complex with PGAM5, RIPK1 and RIPK3. Within this complex, may play a role in the proper targeting of RIPK1-RIPK3 to its downstream effector PGAM5. Interacts with RIPK3; the interaction is direct and promotes its phosphorylation and subsequent activation. Post-translationally, phosphorylation by RIPK3 induces a conformational switch that is required for necroptosis. It also induces homotrimerization and localization to the plasma membrane. As to expression, highly expressed in thymus, colon, intestine, liver, spleen and lung. Expressed at much lower level in skeletal muscle, heart and kidney. Not detected in brain.

It is found in the cytoplasm. The protein localises to the cell membrane. Its subcellular location is the nucleus. With respect to regulation, activated via binding to highly phosphorylated inositol phosphates such as inositolhexakisphosphate (InsP6) which mediates the release of an N-terminal auto-inhibitory region. Activation requires not only RIPK3-dependent phosphorylation but also binding to highly phosphorylated inositol phosphates. Functionally, pseudokinase that plays a key role in TNF-induced necroptosis, a programmed cell death process. Does not have protein kinase activity. Activated following phosphorylation by RIPK3, leading to homotrimerization, localization to the plasma membrane and execution of programmed necrosis characterized by calcium influx and plasma membrane damage. In addition to TNF-induced necroptosis, necroptosis can also take place in the nucleus in response to orthomyxoviruses infection: following ZBP1 activation, which senses double-stranded Z-RNA structures, nuclear RIPK3 catalyzes phosphorylation and activation of MLKL, promoting disruption of the nuclear envelope and leakage of cellular DNA into the cytosol. Binds to highly phosphorylated inositol phosphates such as inositolhexakisphosphate (InsP6) which is essential for its necroptotic function. The polypeptide is Mixed lineage kinase domain-like protein (Mus musculus (Mouse)).